The primary structure comprises 437 residues: Probable receptor-like serine/threonine-protein kinase At4g34500 (437 aa).

Residues Leu-25–Val-45 traverse the membrane as a helical segment. In terms of domain architecture, Protein kinase spans Phe-145–Arg-426. ATP contacts are provided by residues Ile-151 to Val-159 and Lys-173. At Tyr-220 the chain carries Phosphotyrosine. Catalysis depends on Asp-273, which acts as the Proton acceptor. The residue at position 277 (Ser-277) is a Phosphoserine. A phosphothreonine mark is found at Thr-307 and Thr-312. Phosphotyrosine is present on Tyr-320.

The protein belongs to the protein kinase superfamily. Ser/Thr protein kinase family.

The protein resides in the cell membrane. It catalyses the reaction L-seryl-[protein] + ATP = O-phospho-L-seryl-[protein] + ADP + H(+). The catalysed reaction is L-threonyl-[protein] + ATP = O-phospho-L-threonyl-[protein] + ADP + H(+). This is Probable receptor-like serine/threonine-protein kinase At4g34500 from Arabidopsis thaliana (Mouse-ear cress).